Reading from the N-terminus, the 323-residue chain is Phosphoribosylformylglycinamidine cyclo-ligase (323 aa).

This sequence belongs to the AIR synthase family.

Its subcellular location is the cytoplasm. The catalysed reaction is 2-formamido-N(1)-(5-O-phospho-beta-D-ribosyl)acetamidine + ATP = 5-amino-1-(5-phospho-beta-D-ribosyl)imidazole + ADP + phosphate + H(+). It functions in the pathway purine metabolism; IMP biosynthesis via de novo pathway; 5-amino-1-(5-phospho-D-ribosyl)imidazole from N(2)-formyl-N(1)-(5-phospho-D-ribosyl)glycinamide: step 2/2. This Saccharolobus solfataricus (strain ATCC 35092 / DSM 1617 / JCM 11322 / P2) (Sulfolobus solfataricus) protein is Phosphoribosylformylglycinamidine cyclo-ligase.